Reading from the N-terminus, the 403-residue chain is Bifunctional enzyme IspD/IspF (403 aa).

Residues Met-1–Ile-234 form a 2-C-methyl-D-erythritol 4-phosphate cytidylyltransferase region. A 2-C-methyl-D-erythritol 2,4-cyclodiphosphate synthase region spans residues Arg-235–Thr-403. Residues Asp-241 and His-243 each coordinate a divalent metal cation. 4-CDP-2-C-methyl-D-erythritol 2-phosphate-binding positions include Asp-241–His-243 and His-267–Ser-268. His-275 serves as a coordination point for a divalent metal cation. Residues Asp-289–Gly-291, Thr-365–Glu-368, Phe-372, and Arg-375 each bind 4-CDP-2-C-methyl-D-erythritol 2-phosphate.

The protein in the N-terminal section; belongs to the IspD/TarI cytidylyltransferase family. IspD subfamily. This sequence in the C-terminal section; belongs to the IspF family. A divalent metal cation is required as a cofactor.

It catalyses the reaction 2-C-methyl-D-erythritol 4-phosphate + CTP + H(+) = 4-CDP-2-C-methyl-D-erythritol + diphosphate. The catalysed reaction is 4-CDP-2-C-methyl-D-erythritol 2-phosphate = 2-C-methyl-D-erythritol 2,4-cyclic diphosphate + CMP. Its pathway is isoprenoid biosynthesis; isopentenyl diphosphate biosynthesis via DXP pathway; isopentenyl diphosphate from 1-deoxy-D-xylulose 5-phosphate: step 2/6. The protein operates within isoprenoid biosynthesis; isopentenyl diphosphate biosynthesis via DXP pathway; isopentenyl diphosphate from 1-deoxy-D-xylulose 5-phosphate: step 4/6. Its function is as follows. Bifunctional enzyme that catalyzes the formation of 4-diphosphocytidyl-2-C-methyl-D-erythritol from CTP and 2-C-methyl-D-erythritol 4-phosphate (MEP) (IspD), and catalyzes the conversion of 4-diphosphocytidyl-2-C-methyl-D-erythritol 2-phosphate (CDP-ME2P) to 2-C-methyl-D-erythritol 2,4-cyclodiphosphate (ME-CPP) with a corresponding release of cytidine 5-monophosphate (CMP) (IspF). The polypeptide is Bifunctional enzyme IspD/IspF (Nitrobacter hamburgensis (strain DSM 10229 / NCIMB 13809 / X14)).